The primary structure comprises 471 residues: Citrate synthase, mitochondrial (471 aa).

Residues 1–18 (MASLRSATALSRLRSRAG) constitute a mitochondrion transit peptide. Catalysis depends on residues His307, His353, and Asp408.

Belongs to the citrate synthase family. Homodimer.

Its subcellular location is the mitochondrion matrix. It catalyses the reaction oxaloacetate + acetyl-CoA + H2O = citrate + CoA + H(+). The protein operates within carbohydrate metabolism; tricarboxylic acid cycle; isocitrate from oxaloacetate: step 1/2. This Citrus maxima (Pomelo) protein is Citrate synthase, mitochondrial (CIT).